A 183-amino-acid chain; its full sequence is ATP synthase subunit delta (183 aa).

This sequence belongs to the ATPase delta chain family. As to quaternary structure, F-type ATPases have 2 components, F(1) - the catalytic core - and F(0) - the membrane proton channel. F(1) has five subunits: alpha(3), beta(3), gamma(1), delta(1), epsilon(1). F(0) has three main subunits: a(1), b(2) and c(10-14). The alpha and beta chains form an alternating ring which encloses part of the gamma chain. F(1) is attached to F(0) by a central stalk formed by the gamma and epsilon chains, while a peripheral stalk is formed by the delta and b chains.

It is found in the cell membrane. Functionally, f(1)F(0) ATP synthase produces ATP from ADP in the presence of a proton or sodium gradient. F-type ATPases consist of two structural domains, F(1) containing the extramembraneous catalytic core and F(0) containing the membrane proton channel, linked together by a central stalk and a peripheral stalk. During catalysis, ATP synthesis in the catalytic domain of F(1) is coupled via a rotary mechanism of the central stalk subunits to proton translocation. This protein is part of the stalk that links CF(0) to CF(1). It either transmits conformational changes from CF(0) to CF(1) or is implicated in proton conduction. The protein is ATP synthase subunit delta of Mesoplasma florum (strain ATCC 33453 / NBRC 100688 / NCTC 11704 / L1) (Acholeplasma florum).